A 234-amino-acid chain; its full sequence is Putative ankyrin repeat protein RF_0063 (234 aa).

ANK repeat units follow at residues 149–180 (NNNT…TISI) and 184–213 (YNNT…QKAL).

This is Putative ankyrin repeat protein RF_0063 from Rickettsia felis (strain ATCC VR-1525 / URRWXCal2) (Rickettsia azadi).